Consider the following 338-residue polypeptide: Probable arabinan endo-1,5-alpha-L-arabinosidase A (338 aa).

An N-terminal signal peptide occupies residues Met1–Ala20. Asp33 acts as the Proton acceptor in catalysis. Glu217 serves as the catalytic Proton donor.

This sequence belongs to the glycosyl hydrolase 43 family.

The protein resides in the secreted. The catalysed reaction is Endohydrolysis of (1-&gt;5)-alpha-arabinofuranosidic linkages in (1-&gt;5)-arabinans.. The protein operates within glycan metabolism; L-arabinan degradation. Its function is as follows. Endo-1,5-alpha-L-arabinanase involved in degradation of pectin. Its preferred substrate is linear 1,5-alpha-L-arabinan. This is Probable arabinan endo-1,5-alpha-L-arabinosidase A (abnA) from Aspergillus terreus (strain NIH 2624 / FGSC A1156).